Consider the following 468-residue polypeptide: Chromosomal replication initiator protein DnaA (468 aa).

Positions 1–90 (MTQEKWGLLC…NSPMRPARAA (90 aa)) are domain I, interacts with DnaA modulators. Residues 91–126 (RPAAAAAAAAAAVEAPQVSAPRATDTSDVLDGLQAA) form a domain II region. The domain III, AAA+ region stretch occupies residues 127–348 (PLDPRFTFDS…GALTRLFAFA (222 aa)). The ATP site is built by Gly-171, Gly-173, Lys-174, and Thr-175. Residues 349-468 (SLVGREIDME…VEMLRRALEA (120 aa)) are domain IV, binds dsDNA.

The protein belongs to the DnaA family. As to quaternary structure, oligomerizes as a right-handed, spiral filament on DNA at oriC.

Its subcellular location is the cytoplasm. Plays an essential role in the initiation and regulation of chromosomal replication. ATP-DnaA binds to the origin of replication (oriC) to initiate formation of the DNA replication initiation complex once per cell cycle. Binds the DnaA box (a 9 base pair repeat at the origin) and separates the double-stranded (ds)DNA. Forms a right-handed helical filament on oriC DNA; dsDNA binds to the exterior of the filament while single-stranded (ss)DNA is stabiized in the filament's interior. The ATP-DnaA-oriC complex binds and stabilizes one strand of the AT-rich DNA unwinding element (DUE), permitting loading of DNA polymerase. After initiation quickly degrades to an ADP-DnaA complex that is not apt for DNA replication. Binds acidic phospholipids. This chain is Chromosomal replication initiator protein DnaA, found in Ruegeria pomeroyi (strain ATCC 700808 / DSM 15171 / DSS-3) (Silicibacter pomeroyi).